The following is an 873-amino-acid chain: Protein translocase subunit SecA (873 aa).

Residues Gln85, 103-107 (GEGKT), and Asp492 each bind ATP. A compositionally biased stretch (basic and acidic residues) spans 835–856 (RYAEEEGKQPIRKENQIGRNDD). The interval 835 to 873 (RYAEEEGKQPIRKENQIGRNDDCPCGSGKKYKKCCGKNA) is disordered. Residues Cys857, Cys859, Cys868, and Cys869 each coordinate Zn(2+). The span at 863–873 (KKYKKCCGKNA) shows a compositional bias: basic residues.

It belongs to the SecA family. In terms of assembly, monomer and homodimer. Part of the essential Sec protein translocation apparatus which comprises SecA, SecYEG and auxiliary proteins SecDF. Other proteins may also be involved. Requires Zn(2+) as cofactor.

It localises to the cell membrane. The protein localises to the cytoplasm. It catalyses the reaction ATP + H2O + cellular proteinSide 1 = ADP + phosphate + cellular proteinSide 2.. Its function is as follows. Part of the Sec protein translocase complex. Interacts with the SecYEG preprotein conducting channel. Has a central role in coupling the hydrolysis of ATP to the transfer of proteins into and across the cell membrane, serving as an ATP-driven molecular motor driving the stepwise translocation of polypeptide chains across the membrane. The protein is Protein translocase subunit SecA of Desulforamulus reducens (strain ATCC BAA-1160 / DSM 100696 / MI-1) (Desulfotomaculum reducens).